Consider the following 415-residue polypeptide: Gamma-glutamyl phosphate reductase (415 aa).

Belongs to the gamma-glutamyl phosphate reductase family.

It is found in the cytoplasm. The catalysed reaction is L-glutamate 5-semialdehyde + phosphate + NADP(+) = L-glutamyl 5-phosphate + NADPH + H(+). The protein operates within amino-acid biosynthesis; L-proline biosynthesis; L-glutamate 5-semialdehyde from L-glutamate: step 2/2. Its function is as follows. Catalyzes the NADPH-dependent reduction of L-glutamate 5-phosphate into L-glutamate 5-semialdehyde and phosphate. The product spontaneously undergoes cyclization to form 1-pyrroline-5-carboxylate. This chain is Gamma-glutamyl phosphate reductase, found in Clostridium perfringens (strain SM101 / Type A).